We begin with the raw amino-acid sequence, 127 residues long: Ribonuclease P protein component 1 (127 aa).

It belongs to the eukaryotic/archaeal RNase P protein component 1 family. As to quaternary structure, consists of a catalytic RNA component and at least 5 protein subunits. Forms a heterodimeric subcomplex with Rnp4. Reconstituted enzyme missing individual protein subunits is suboptimally active, showing each subunit contributes to optimization of activity.

It localises to the cytoplasm. It catalyses the reaction Endonucleolytic cleavage of RNA, removing 5'-extranucleotides from tRNA precursor.. Functionally, part of ribonuclease P (RNase P), a protein complex that generates mature tRNA molecules by cleaving their 5'-ends. Binds RNase P RNA. The chain is Ribonuclease P protein component 1 from Pyrococcus horikoshii (strain ATCC 700860 / DSM 12428 / JCM 9974 / NBRC 100139 / OT-3).